The sequence spans 86 residues: DNA-directed RNA polymerase subunit Rpo11 (86 aa).

Belongs to the archaeal Rpo11/eukaryotic RPB11/RPC19 RNA polymerase subunit family. Part of the RNA polymerase complex.

The protein resides in the cytoplasm. The enzyme catalyses RNA(n) + a ribonucleoside 5'-triphosphate = RNA(n+1) + diphosphate. DNA-dependent RNA polymerase (RNAP) catalyzes the transcription of DNA into RNA using the four ribonucleoside triphosphates as substrates. The protein is DNA-directed RNA polymerase subunit Rpo11 of Archaeoglobus fulgidus (strain ATCC 49558 / DSM 4304 / JCM 9628 / NBRC 100126 / VC-16).